The chain runs to 289 residues: NFIL3 like protein (289 aa).

The segment at 1–27 is disordered; that stretch reads MDVGFSGLPDVSQSHSKTLWGARGRGP. A bZIP domain is found at 42 to 105; sequence DTVYWEKRRK…GLLPLTGGPR (64 aa). Positions 48–64 are basic motif; it reads KRRKNNEAAKRSREKRR. A leucine-zipper region spans residues 70 to 91; the sequence is IEGRLAALMEENALLKGELKAL.

It belongs to the bZIP family. NFIL3 subfamily.

It localises to the nucleus. The polypeptide is NFIL3 like protein (Homo sapiens (Human)).